The sequence spans 384 residues: Somatostatin receptor type 4 (384 aa).

The tract at residues 1–34 (MNTPATLPLGGEDTTWTPGINASWAPDEEEDAVR) is disordered. The Extracellular portion of the chain corresponds to 1-41 (MNTPATLPLGGEDTTWTPGINASWAPDEEEDAVRSDGTGTA). Asn-21 carries N-linked (GlcNAc...) asparagine glycosylation. Residues 42–69 (GMVTIQCIYALVCLVGLVGNALVIFVIL) traverse the membrane as a helical segment. Topologically, residues 70–79 (RYAKMKTATN) are cytoplasmic. Residues 80–105 (IYLLNLAVADELFMLSVPFVASAAAL) form a helical membrane-spanning segment. Over 106 to 116 (RHWPFGAVLCR) the chain is Extracellular. A disulfide bridge connects residues Cys-115 and Cys-194. A helical membrane pass occupies residues 117–138 (AVLSVDGLNMFTSVFCLTVLSV). Residues 139–160 (DRYVAVVHPLRAATYRRPSVAK) are Cytoplasmic-facing. Residues 161–181 (LINLGVWLASLLVTLPIAVFA) form a helical membrane-spanning segment. At 182–203 (DTRPARGGEAVACNLHWPHPAW) the chain is on the extracellular side. The helical transmembrane segment at 204 to 228 (SAVFVIYTFLLGFLLPVLAIGLCYL) threads the bilayer. Residues 229 to 254 (LIVGKMRAVALRAGWQQRRRSEKKIT) are Cytoplasmic-facing. Residues 255 to 280 (RLVLMVVTVFVLCWMPFYVVQLLNLF) traverse the membrane as a helical segment. Residues 281-287 (VTSLDAT) lie on the Extracellular side of the membrane. A helical membrane pass occupies residues 288–311 (VNHVSLILSYANSCANPILYGFLS). At 312-384 (DNFRRSFQRV…RVPFTKTTTF (73 aa)) the chain is on the cytoplasmic side. Cys-323 is lipidated: S-palmitoyl cysteine.

It belongs to the G-protein coupled receptor 1 family. In terms of tissue distribution, brain, lung, heart and islets. Moderate levels in the hippocampus, cortex and olfactory bulb.

The protein localises to the cell membrane. In terms of biological role, receptor for somatostatin-14. The activity of this receptor is mediated by G proteins which inhibits adenylyl cyclase. It is functionally coupled not only to inhibition of adenylate cyclase, but also to activation of both arachidonate release and mitogen-activated protein (MAP) kinase cascade. This chain is Somatostatin receptor type 4 (Sstr4), found in Rattus norvegicus (Rat).